We begin with the raw amino-acid sequence, 371 residues long: Large ribosomal subunit protein bL27m (371 aa).

The N-terminal 27 residues, 1 to 27, are a transit peptide targeting the mitochondrion; it reads MWNPILLDTSSFSFQKHVSGVFLQVRN.

The protein belongs to the bacterial ribosomal protein bL27 family. As to quaternary structure, component of the mitochondrial large ribosomal subunit (mt-LSU). Mature yeast 74S mitochondrial ribosomes consist of a small (37S) and a large (54S) subunit. The 37S small subunit contains a 15S ribosomal RNA (15S mt-rRNA) and 34 different proteins. The 54S large subunit contains a 21S rRNA (21S mt-rRNA) and 46 different proteins.

The protein localises to the mitochondrion. Component of the mitochondrial ribosome (mitoribosome), a dedicated translation machinery responsible for the synthesis of mitochondrial genome-encoded proteins, including at least some of the essential transmembrane subunits of the mitochondrial respiratory chain. The mitoribosomes are attached to the mitochondrial inner membrane and translation products are cotranslationally integrated into the membrane. This is Large ribosomal subunit protein bL27m (MRP7) from Saccharomyces cerevisiae (strain ATCC 204508 / S288c) (Baker's yeast).